We begin with the raw amino-acid sequence, 178 residues long: ATP synthase subunit d, mitochondrial (178 aa).

Residues Asn149–His178 are disordered. Residues Lys165–His178 are compositionally biased toward basic and acidic residues.

Belongs to the ATPase d subunit family. In terms of assembly, F-type ATPases have 2 components, CF(1) - the catalytic core - and CF(0) - the membrane proton channel. CF(0) seems to have nine subunits: a, b, c, d, e, f, g, F6 and 8 (or A6L).

It is found in the mitochondrion. The protein localises to the mitochondrion inner membrane. In terms of biological role, mitochondrial membrane ATP synthase (F(1)F(0) ATP synthase or Complex V) produces ATP from ADP in the presence of a proton gradient across the membrane which is generated by electron transport complexes of the respiratory chain. F-type ATPases consist of two structural domains, F(1) - containing the extramembraneous catalytic core, and F(0) - containing the membrane proton channel, linked together by a central stalk and a peripheral stalk. During catalysis, ATP synthesis in the catalytic domain of F(1) is coupled via a rotary mechanism of the central stalk subunits to proton translocation. Part of the complex F(0) domain and the peripheric stalk, which acts as a stator to hold the catalytic alpha(3)beta(3) subcomplex and subunit a/ATP6 static relative to the rotary elements. This is ATP synthase subunit d, mitochondrial from Drosophila melanogaster (Fruit fly).